The following is a 262-amino-acid chain: Glucosamine-6-phosphate deaminase (262 aa).

The active-site Proton acceptor; for enolization step is Asp63. Asn129 serves as the catalytic For ring-opening step. The active-site Proton acceptor; for ring-opening step is His131. The active-site For ring-opening step is the Glu136.

The protein belongs to the glucosamine/galactosamine-6-phosphate isomerase family. NagB subfamily.

The enzyme catalyses alpha-D-glucosamine 6-phosphate + H2O = beta-D-fructose 6-phosphate + NH4(+). It functions in the pathway amino-sugar metabolism; N-acetylneuraminate degradation; D-fructose 6-phosphate from N-acetylneuraminate: step 5/5. Catalyzes the reversible isomerization-deamination of glucosamine 6-phosphate (GlcN6P) to form fructose 6-phosphate (Fru6P) and ammonium ion. This Bacillus cereus (strain ZK / E33L) protein is Glucosamine-6-phosphate deaminase.